We begin with the raw amino-acid sequence, 86 residues long: Large ribosomal subunit protein bL31B (86 aa).

This sequence belongs to the bacterial ribosomal protein bL31 family. Type B subfamily. In terms of assembly, part of the 50S ribosomal subunit.

The chain is Large ribosomal subunit protein bL31B from Erwinia tasmaniensis (strain DSM 17950 / CFBP 7177 / CIP 109463 / NCPPB 4357 / Et1/99).